The chain runs to 388 residues: Succinyl-diaminopimelate desuccinylase (388 aa).

Residue His72 coordinates Zn(2+). Asp74 is a catalytic residue. Asp105 contacts Zn(2+). The active-site Proton acceptor is Glu139. Residues Glu140, Glu168, and His353 each contribute to the Zn(2+) site.

The protein belongs to the peptidase M20A family. DapE subfamily. In terms of assembly, homodimer. The cofactor is Zn(2+). Co(2+) serves as cofactor.

It catalyses the reaction N-succinyl-(2S,6S)-2,6-diaminopimelate + H2O = (2S,6S)-2,6-diaminopimelate + succinate. It participates in amino-acid biosynthesis; L-lysine biosynthesis via DAP pathway; LL-2,6-diaminopimelate from (S)-tetrahydrodipicolinate (succinylase route): step 3/3. Functionally, catalyzes the hydrolysis of N-succinyl-L,L-diaminopimelic acid (SDAP), forming succinate and LL-2,6-diaminopimelate (DAP), an intermediate involved in the bacterial biosynthesis of lysine and meso-diaminopimelic acid, an essential component of bacterial cell walls. This chain is Succinyl-diaminopimelate desuccinylase, found in Orientia tsutsugamushi (strain Ikeda) (Rickettsia tsutsugamushi).